The sequence spans 295 residues: 4-hydroxy-tetrahydrodipicolinate synthase (295 aa).

A pyruvate-binding site is contributed by Thr47. Tyr135 acts as the Proton donor/acceptor in catalysis. Lys163 functions as the Schiff-base intermediate with substrate in the catalytic mechanism. Residue Ile206 coordinates pyruvate.

Belongs to the DapA family. Homodimer.

The protein resides in the cytoplasm. The catalysed reaction is L-aspartate 4-semialdehyde + pyruvate = (2S,4S)-4-hydroxy-2,3,4,5-tetrahydrodipicolinate + H2O + H(+). It functions in the pathway amino-acid biosynthesis; L-lysine biosynthesis via DAP pathway; (S)-tetrahydrodipicolinate from L-aspartate: step 3/4. Is not feedback inhibited by lysine. In terms of biological role, catalyzes the condensation of (S)-aspartate-beta-semialdehyde [(S)-ASA] and pyruvate to 4-hydroxy-tetrahydrodipicolinate (HTPA). The polypeptide is 4-hydroxy-tetrahydrodipicolinate synthase (Staphylococcus aureus (strain COL)).